The sequence spans 506 residues: Methylthioalkylmalate synthase 1, chloroplastic (506 aa).

Residues 1–49 constitute a chloroplast transit peptide; sequence MASSLLTSSVMIPTTGSTVVGRSVLPFQSSLHSLRLTHSYKNPALFISC. The 275-residue stretch at 85–359 folds into the Pyruvate carboxyltransferase domain; that stretch reads VRVFDTTLRD…YTKIDTRQIM (275 aa). The residue at position 98 (Ser-98) is a Phosphoserine.

Belongs to the alpha-IPM synthase/homocitrate synthase family. Monomer. It depends on Mn(2+) as a cofactor. In terms of tissue distribution, highly expressed in leaves, flowers, roots and siliques. Not detected in flowers in PubMed:12432038.

The protein localises to the plastid. It is found in the chloroplast. The catalysed reaction is an omega-(methylsulfanyl)-2-oxoalkanoate + acetyl-CoA + H2O = a 2-(omega-methylsulfanyl)alkylmalate + CoA + H(+). With respect to regulation, 1 mM DTT required for activity. Activated by ATP and inhibited by iodoacetamide. Its function is as follows. Determines the side chain length of aliphatic glucosinolate structures. Catalyzes exclusively the condensation reactions of both the first and second methionine carbon chain elongation. This is Methylthioalkylmalate synthase 1, chloroplastic (MAM1) from Arabidopsis thaliana (Mouse-ear cress).